A 325-amino-acid polypeptide reads, in one-letter code: tRNA(Ile)-lysidine synthase (325 aa).

34-39 is a binding site for ATP; that stretch reads SGGQDS.

Belongs to the tRNA(Ile)-lysidine synthase family.

It localises to the cytoplasm. The enzyme catalyses cytidine(34) in tRNA(Ile2) + L-lysine + ATP = lysidine(34) in tRNA(Ile2) + AMP + diphosphate + H(+). Ligates lysine onto the cytidine present at position 34 of the AUA codon-specific tRNA(Ile) that contains the anticodon CAU, in an ATP-dependent manner. Cytidine is converted to lysidine, thus changing the amino acid specificity of the tRNA from methionine to isoleucine. This is tRNA(Ile)-lysidine synthase from Synechococcus sp. (strain ATCC 27144 / PCC 6301 / SAUG 1402/1) (Anacystis nidulans).